The chain runs to 2008 residues: Histone-lysine N-methyltransferase SETD1B (2008 aa).

A compositionally biased stretch (basic and acidic residues) spans Met-1 to Lys-20. Residues Met-1 to Lys-42 are disordered. Positions Gln-22 to Ser-39 are enriched in polar residues. An RRM domain is found at Asp-111–Lys-199. 9 disordered regions span residues Asn-249 to Lys-390, Phe-402 to Thr-652, Pro-682 to Pro-725, Arg-950 to Glu-1172, Thr-1309 to Glu-1328, Val-1345 to Thr-1461, Val-1563 to Gly-1600, Lys-1674 to Arg-1712, and Glu-1814 to Glu-1842. A compositionally biased stretch (low complexity) spans Ser-251–Pro-264. Polar residues-rich tracts occupy residues Phe-265 to Pro-293, Pro-301 to Pro-315, His-360 to Leu-381, Ser-405 to Ser-414, and Asp-456 to Ser-491. A compositionally biased stretch (basic and acidic residues) spans Leu-492–Met-521. The span at Ser-524–Pro-537 shows a compositional bias: low complexity. 2 stretches are compositionally biased toward polar residues: residues Gly-540–Gly-560 and Ala-582–Arg-604. 2 stretches are compositionally biased toward basic and acidic residues: residues Ser-606–Val-617 and Glu-626–Gly-636. Residues Glu-637 to Met-646 are compositionally biased toward acidic residues. A compositionally biased stretch (basic and acidic residues) spans Glu-979 to Glu-997. Over residues Leu-1011 to Glu-1020 the composition is skewed to acidic residues. The segment covering Thr-1021 to Glu-1031 has biased composition (basic and acidic residues). Composition is skewed to acidic residues over residues Glu-1050 to Ala-1094 and Glu-1105 to Asp-1149. Positions Arg-1150–Glu-1172 are enriched in basic and acidic residues. Residues Val-1345–Pro-1356 show a composition bias toward low complexity. The segment covering Ser-1378–Leu-1392 has biased composition (basic and acidic residues). Over residues Leu-1418 to Ser-1427 the composition is skewed to low complexity. 2 stretches are compositionally biased toward basic residues: residues Leu-1577 to Arg-1587 and Lys-1681 to Lys-1690. Over residues Ile-1699–Gln-1710 the composition is skewed to pro residues. Positions Arg-1840–Arg-1845 match the RxxxRR motif motif. The SET domain maps to Lys-1869 to Lys-1986. Tyr-1985 contributes to the S-adenosyl-L-methionine binding site. Residues Val-1992–Asn-2008 form the Post-SET domain.

The protein belongs to the class V-like SAM-binding methyltransferase superfamily. In terms of assembly, component of the SET1B/COMPASS complex.

The protein resides in the nucleus speckle. It is found in the chromosome. It carries out the reaction L-lysyl(4)-[histone H3] + 3 S-adenosyl-L-methionine = N(6),N(6),N(6)-trimethyl-L-lysyl(4)-[histone H3] + 3 S-adenosyl-L-homocysteine + 3 H(+). In terms of biological role, histone methyltransferase that specifically methylates 'Lys-4' of histone H3, when part of the SET1 histone methyltransferase (HMT) complex, but not if the neighboring 'Lys-9' residue is already methylated. H3 'Lys-4' methylation represents a specific tag for epigenetic transcriptional activation. The polypeptide is Histone-lysine N-methyltransferase SETD1B (SETD1B) (Gallus gallus (Chicken)).